The chain runs to 84 residues: MKKQMHPDYHPVVFQDASTGKSFLTRSTVTSERTVEWEDGGTYPLLVVDVTSDSHPFWTGAQRVMDTAGRVEKFERRYGKRKAL.

The protein belongs to the bacterial ribosomal protein bL31 family. Type B subfamily. In terms of assembly, part of the 50S ribosomal subunit.

The protein is Large ribosomal subunit protein bL31B of Rhodococcus erythropolis (strain PR4 / NBRC 100887).